The primary structure comprises 301 residues: Protein p34 (301 aa).

5 helical membrane-spanning segments follow: residues 15–35 (YLSV…WVVT), 40–60 (ILAA…NLIA), 83–103 (TIFS…FSSV), 120–140 (TVMY…TYVI), and 171–191 (LSDY…LYIF).

This sequence belongs to the cation diffusion facilitator (CDF) transporter (TC 2.A.4) family.

It is found in the cell membrane. This is Protein p34 (p34) from Rickettsia rickettsii (strain Sheila Smith).